Here is a 138-residue protein sequence, read N- to C-terminus: MTGSKKTPSTSPSKKLSSPPEVKLRHRFAKRQIRRRRIDLACGCSIYIHINCVNNGFTHRGTHHCSSSSEWRFYLGASKSPIFQNTASGDANVHTQPGISHSSQSKPQHEDSVGSPQSLLQLPSLDDVDDDFWADLLK.

A compositionally biased stretch (low complexity) spans 1 to 20; sequence MTGSKKTPSTSPSKKLSSPP. The segment at 1–23 is disordered; the sequence is MTGSKKTPSTSPSKKLSSPPEVK. The Nuclear localization signal signature appears at 23-37; it reads KLRHRFAKRQIRRRR. A zinc finger spans residues 42–59; the sequence is CGCSIYIHINCVNNGFTH. Positions 85–106 are enriched in polar residues; sequence NTASGDANVHTQPGISHSSQSK. Residues 85 to 123 form a disordered region; the sequence is NTASGDANVHTQPGISHSSQSKPQHEDSVGSPQSLLQLP. A compositionally biased stretch (low complexity) spans 113 to 123; the sequence is VGSPQSLLQLP. Positions 124–138 are transactivation; the sequence is SLDDVDDDFWADLLK.

It belongs to the geminiviridae transcriptional activator protein family. As to quaternary structure, monomer. Homodimer. Homooligomer. Self-interaction correlates with nuclear localization and efficient activation of transcription. Monomers suppress local silencing by interacting with and inactivating host adenosine kinase 2 (ADK2) in the cytoplasm. Interacts with and inhibits host SNF1 kinase. Binds to ssDNA. Post-translationally, phosphorylated.

It localises to the host nucleus. It is found in the host cytoplasm. Functionally, strong activator of the late viral genes promoters. Enhances the expression of the capsid protein and nuclear shuttle protein. Acts as a suppressor of RNA-mediated gene silencing, also known as post-transcriptional gene silencing (PTGS), a mechanism of plant viral defense that limits the accumulation of viral RNAs. Suppresses the host RNA silencing by inhibiting adenosine kinase 2 (ADK2), a kinase involved in a general methylation pathway. Also suppresses the host basal defense by interacting with and inhibiting SNF1 kinase, a key regulator of cell metabolism implicated in innate antiviral defense. Determines pathogenicity. In Pepper huasteco yellow vein virus (PHYVV), this protein is Transcriptional activator protein.